The primary structure comprises 77 residues: uncharacterized protein (77 aa).

The HTH cro/C1-type domain occupies 13–67 (VLQYMVNNDYSLNQLALEIGVSPATLSRVLNGERRPGQLVIGKMLHYFNLKFEDL). Residues 24-43 (LNQLALEIGVSPATLSRVLN) constitute a DNA-binding region (H-T-H motif).

Its subcellular location is the cytoplasm. This is an uncharacterized protein from Bacillus subtilis (strain 168).